Reading from the N-terminus, the 309-residue chain is Homoserine O-succinyltransferase (309 aa).

C142 serves as the catalytic Acyl-thioester intermediate. Residues K163 and S192 each coordinate substrate. The active-site Proton acceptor is H235. E237 is an active-site residue. R249 is a substrate binding site.

Belongs to the MetA family.

It is found in the cytoplasm. The catalysed reaction is L-homoserine + succinyl-CoA = O-succinyl-L-homoserine + CoA. The protein operates within amino-acid biosynthesis; L-methionine biosynthesis via de novo pathway; O-succinyl-L-homoserine from L-homoserine: step 1/1. Transfers a succinyl group from succinyl-CoA to L-homoserine, forming succinyl-L-homoserine. This Klebsiella pneumoniae subsp. pneumoniae (strain ATCC 700721 / MGH 78578) protein is Homoserine O-succinyltransferase.